A 340-amino-acid chain; its full sequence is Annexin A2-B (340 aa).

The interval A2 to L25 is P10 binding site. A Phosphoserine; by PKC modification is found at S27. 4 Annexin repeats span residues F34–K105, T106–K177, E190–Q262, and N266–G337.

The protein belongs to the annexin family. Tetramer of 2 light chains (p10 proteins) and 2 heavy chains (p36 proteins). In terms of tissue distribution, adult brain, heart, striated muscle, liver, kidney, and very high levels in skin.

It is found in the secreted. The protein localises to the extracellular space. Its subcellular location is the extracellular matrix. It localises to the basement membrane. Functionally, calcium-regulated membrane-binding protein whose affinity for calcium is greatly enhanced by anionic phospholipids. It binds two calcium ions with high affinity. The sequence is that of Annexin A2-B (anxa2-b) from Xenopus laevis (African clawed frog).